The primary structure comprises 853 residues: Mitochondrial 15S rRNA processing factor CCM1 (853 aa).

Residues 1–25 constitute a mitochondrion transit peptide; it reads MLSLGKNGKTSSTLVRNARRSVIMP. PPR repeat units follow at residues 310–344 and 347–381; these read NRKNYTTVISFYTKMEHYKKAWQLFDSLKFLSLEH and DTKVYNLMLEVCQKEKNYARSLDIFQEMDDLNVTK.

This sequence belongs to the CCM1 family. In terms of assembly, binds to mitochondrial small subunit 15S rRNA.

The protein resides in the mitochondrion. Regulates mitochondrial small subunit maturation by controlling 15S rRNA 5'-end processing. Localizes to the 5' precursor of the 15S rRNA in a position that is subsequently occupied by mS47 in the mature yeast mtSSU. Uses structure and sequence-specific RNA recognition, binding to a single-stranded region of the precursor and specifically recognizing bases -6 to -1. The exchange of Ccm1 for mS47 is coupled to the irreversible removal of precursor rRNA that is accompanied by conformational changes of the mitoribosomal proteins uS5m and mS26. These conformational changes signal completion of 5'-end rRNA processing through protection of the mature 5'-end of the 15S rRNA and stabilization of mS47. The removal of the 5' precursor together with the dissociation of Ccm1 may be catalyzed by the 5'-3' exoribonuclease Pet127. Involved in the specific removal of group I introns in mitochondrial encoded transcripts. This Kluyveromyces lactis (strain ATCC 8585 / CBS 2359 / DSM 70799 / NBRC 1267 / NRRL Y-1140 / WM37) (Yeast) protein is Mitochondrial 15S rRNA processing factor CCM1 (CCM1).